A 72-amino-acid polypeptide reads, in one-letter code: UPF0346 protein GK1571 (72 aa).

It belongs to the UPF0346 family.

The protein is UPF0346 protein GK1571 of Geobacillus kaustophilus (strain HTA426).